We begin with the raw amino-acid sequence, 337 residues long: GTPase Obg (337 aa).

The Obg domain occupies 1–158; that stretch reads MFVDRVIIEL…HHIELELKLI (158 aa). The OBG-type G domain occupies 159–330; it reads ADVGLVGFPN…LIEKMTQRLS (172 aa). GTP-binding positions include 165–172, 190–194, 212–215, 282–285, and 311–313; these read GFPNAGKS, FTTLQ, DIPG, NKID, and SAV. Mg(2+)-binding residues include serine 172 and threonine 192.

Belongs to the TRAFAC class OBG-HflX-like GTPase superfamily. OBG GTPase family. In terms of assembly, monomer. Mg(2+) serves as cofactor.

It is found in the cytoplasm. Its function is as follows. An essential GTPase which binds GTP, GDP and possibly (p)ppGpp with moderate affinity, with high nucleotide exchange rates and a fairly low GTP hydrolysis rate. Plays a role in control of the cell cycle, stress response, ribosome biogenesis and in those bacteria that undergo differentiation, in morphogenesis control. This Protochlamydia amoebophila (strain UWE25) protein is GTPase Obg.